We begin with the raw amino-acid sequence, 400 residues long: Phosphoglycerate kinase (400 aa).

Substrate contacts are provided by residues 23–25 (DLN), R38, 61–64 (HFGR), R120, and R153. ATP-binding positions include K203, E325, and 355-358 (GGDT).

The protein belongs to the phosphoglycerate kinase family. Monomer.

Its subcellular location is the cytoplasm. It carries out the reaction (2R)-3-phosphoglycerate + ATP = (2R)-3-phospho-glyceroyl phosphate + ADP. It functions in the pathway carbohydrate degradation; glycolysis; pyruvate from D-glyceraldehyde 3-phosphate: step 2/5. In Methylorubrum populi (strain ATCC BAA-705 / NCIMB 13946 / BJ001) (Methylobacterium populi), this protein is Phosphoglycerate kinase.